A 231-amino-acid polypeptide reads, in one-letter code: Phosphatidylserine decarboxylase proenzyme (231 aa).

The Schiff-base intermediate with substrate; via pyruvic acid role is filled by Ser200. Ser200 is modified (pyruvic acid (Ser); by autocatalysis).

It belongs to the phosphatidylserine decarboxylase family. PSD-A subfamily. In terms of assembly, heterodimer of a large membrane-associated beta subunit and a small pyruvoyl-containing alpha subunit. Pyruvate is required as a cofactor. In terms of processing, is synthesized initially as an inactive proenzyme. Formation of the active enzyme involves a self-maturation process in which the active site pyruvoyl group is generated from an internal serine residue via an autocatalytic post-translational modification. Two non-identical subunits are generated from the proenzyme in this reaction, and the pyruvate is formed at the N-terminus of the alpha chain, which is derived from the carboxyl end of the proenzyme. The post-translation cleavage follows an unusual pathway, termed non-hydrolytic serinolysis, in which the side chain hydroxyl group of the serine supplies its oxygen atom to form the C-terminus of the beta chain, while the remainder of the serine residue undergoes an oxidative deamination to produce ammonia and the pyruvoyl prosthetic group on the alpha chain.

The protein resides in the cell membrane. It carries out the reaction a 1,2-diacyl-sn-glycero-3-phospho-L-serine + H(+) = a 1,2-diacyl-sn-glycero-3-phosphoethanolamine + CO2. It participates in phospholipid metabolism; phosphatidylethanolamine biosynthesis; phosphatidylethanolamine from CDP-diacylglycerol: step 2/2. In terms of biological role, catalyzes the formation of phosphatidylethanolamine (PtdEtn) from phosphatidylserine (PtdSer). In Mycobacterium tuberculosis (strain ATCC 25177 / H37Ra), this protein is Phosphatidylserine decarboxylase proenzyme.